Consider the following 208-residue polypeptide: MARYRGPVEKLERRFGVSLALKGERRLAGKSALDKRPYAPGQHGARKGKISEYGLQLREKQKAKFMYGVSEKQFRRLFAEAARREGNTGVLLIQLLEQRLDNVVYRMGFATTRRFARQLVTHGHVLVNGKRVDIPSFRVEAGAKIEIIEKSKNNPQITRAIELTAQTGIVAWVDVEKDKRFGIFTRKPEREEVVIPVEERFIVELYSK.

The S4 RNA-binding domain occupies 98 to 163; that stretch reads QRLDNVVYRM…NPQITRAIEL (66 aa).

It belongs to the universal ribosomal protein uS4 family. Part of the 30S ribosomal subunit. Contacts protein S5. The interaction surface between S4 and S5 is involved in control of translational fidelity.

In terms of biological role, one of the primary rRNA binding proteins, it binds directly to 16S rRNA where it nucleates assembly of the body of the 30S subunit. Its function is as follows. With S5 and S12 plays an important role in translational accuracy. This Campylobacter jejuni subsp. jejuni serotype O:6 (strain 81116 / NCTC 11828) protein is Small ribosomal subunit protein uS4.